A 391-amino-acid polypeptide reads, in one-letter code: Phosphatidate cytidylyltransferase 4, chloroplastic (391 aa).

Residues 1-61 constitute a chloroplast transit peptide; sequence MATFAELVLS…SVSRRFLTAV (61 aa). The next 6 membrane-spanning stretches (helical) occupy residues 102–122, 175–195, 202–222, 254–274, 298–318, and 321–341; these read IFGI…GWVF, FGNI…ALLV, FAQL…PSFW, VGLV…TFAF, IVGL…LSWP, and LFSS…GDLT.

This sequence belongs to the CDS family. Mg(2+) is required as a cofactor.

It is found in the plastid. The protein localises to the chloroplast membrane. The enzyme catalyses a 1,2-diacyl-sn-glycero-3-phosphate + CTP + H(+) = a CDP-1,2-diacyl-sn-glycerol + diphosphate. Its pathway is phospholipid metabolism; CDP-diacylglycerol biosynthesis; CDP-diacylglycerol from sn-glycerol 3-phosphate: step 3/3. Its activity is regulated as follows. Highest activities is obtained at about 30 mM CTP and 2 mM phosphatidic acid (PA). Functionally, may be involved in the synthesis of minor phospholipids and in modulation of IP3-mediated signal transduction. Promotes the biosynthesis of plastidial phosphatidylglycerol (PG) which is required for structure and function of thylakoid membranes and, hence, for photoautotrophic growth. In Arabidopsis thaliana (Mouse-ear cress), this protein is Phosphatidate cytidylyltransferase 4, chloroplastic.